Reading from the N-terminus, the 312-residue chain is Glyoxylate/hydroxypyruvate reductase A (312 aa).

Residue Arg-227 is part of the active site. His-275 (proton donor) is an active-site residue.

The protein belongs to the D-isomer specific 2-hydroxyacid dehydrogenase family. GhrA subfamily.

The protein localises to the cytoplasm. The catalysed reaction is glycolate + NADP(+) = glyoxylate + NADPH + H(+). The enzyme catalyses (R)-glycerate + NAD(+) = 3-hydroxypyruvate + NADH + H(+). It carries out the reaction (R)-glycerate + NADP(+) = 3-hydroxypyruvate + NADPH + H(+). Functionally, catalyzes the NADPH-dependent reduction of glyoxylate and hydroxypyruvate into glycolate and glycerate, respectively. Inactive towards 2-oxo-D-gluconate, 2-oxoglutarate, oxaloacetate and pyruvate. Only D- and L-glycerate are involved in the oxidative activity with NADP. Activity with NAD is very low. The protein is Glyoxylate/hydroxypyruvate reductase A (ghrA) of Escherichia coli (strain K12).